Reading from the N-terminus, the 412-residue chain is Multifunctional CCA protein (412 aa).

The ATP site is built by Gly8 and Arg11. Gly8 and Arg11 together coordinate CTP. The Mg(2+) site is built by Asp21 and Asp23. Positions 91, 137, and 140 each coordinate ATP. CTP is bound by residues Arg91, Arg137, and Arg140. Positions 228-329 (TGIHTLMTLS…VKLFDSIDAW (102 aa)) constitute an HD domain.

This sequence belongs to the tRNA nucleotidyltransferase/poly(A) polymerase family. Bacterial CCA-adding enzyme type 1 subfamily. Monomer. Can also form homodimers and oligomers. The cofactor is Mg(2+). It depends on Ni(2+) as a cofactor.

It catalyses the reaction a tRNA precursor + 2 CTP + ATP = a tRNA with a 3' CCA end + 3 diphosphate. It carries out the reaction a tRNA with a 3' CCA end + 2 CTP + ATP = a tRNA with a 3' CCACCA end + 3 diphosphate. Its function is as follows. Catalyzes the addition and repair of the essential 3'-terminal CCA sequence in tRNAs without using a nucleic acid template. Adds these three nucleotides in the order of C, C, and A to the tRNA nucleotide-73, using CTP and ATP as substrates and producing inorganic pyrophosphate. tRNA 3'-terminal CCA addition is required both for tRNA processing and repair. Also involved in tRNA surveillance by mediating tandem CCA addition to generate a CCACCA at the 3' terminus of unstable tRNAs. While stable tRNAs receive only 3'-terminal CCA, unstable tRNAs are marked with CCACCA and rapidly degraded. The sequence is that of Multifunctional CCA protein from Escherichia coli O6:K15:H31 (strain 536 / UPEC).